The chain runs to 160 residues: uncharacterized protein (160 aa).

One can recognise an N-acetyltransferase domain in the interval Met2–Pro140.

This is an uncharacterized protein from Bacillus subtilis (strain 168).